The primary structure comprises 373 residues: Deoxyguanosinetriphosphate triphosphohydrolase-like protein 1 (373 aa).

The disordered stretch occupies residues 21-43; the sequence is RSSEARRAVPEAPSETRTAYQKD. The HD domain occupies 76–198; it reads RLTHTLEVQQ…VDAADALAYT (123 aa).

This sequence belongs to the dGTPase family. Type 2 subfamily.

The sequence is that of Deoxyguanosinetriphosphate triphosphohydrolase-like protein 1 from Deinococcus radiodurans (strain ATCC 13939 / DSM 20539 / JCM 16871 / CCUG 27074 / LMG 4051 / NBRC 15346 / NCIMB 9279 / VKM B-1422 / R1).